The chain runs to 282 residues: Phosphate import ATP-binding protein PstB (282 aa).

Over residues 1–10 (MNMAESHLDP) the composition is skewed to basic and acidic residues. Positions 1–24 (MNMAESHLDPSKLATGPAGAGAAT) are disordered. A compositionally biased stretch (low complexity) spans 14–24 (ATGPAGAGAAT). In terms of domain architecture, ABC transporter spans 36-277 (IEVKNLNFFY…PARKETEDYI (242 aa)). 68 to 75 (GPSGCGKS) contacts ATP.

It belongs to the ABC transporter superfamily. Phosphate importer (TC 3.A.1.7) family. In terms of assembly, the complex is composed of two ATP-binding proteins (PstB), two transmembrane proteins (PstC and PstA) and a solute-binding protein (PstS).

It is found in the cell inner membrane. It catalyses the reaction phosphate(out) + ATP + H2O = ADP + 2 phosphate(in) + H(+). Functionally, part of the ABC transporter complex PstSACB involved in phosphate import. Responsible for energy coupling to the transport system. The chain is Phosphate import ATP-binding protein PstB from Burkholderia thailandensis (strain ATCC 700388 / DSM 13276 / CCUG 48851 / CIP 106301 / E264).